The primary structure comprises 136 residues: Large ribosomal subunit protein bL20 (136 aa).

Belongs to the bacterial ribosomal protein bL20 family.

Functionally, binds directly to 23S ribosomal RNA and is necessary for the in vitro assembly process of the 50S ribosomal subunit. It is not involved in the protein synthesizing functions of that subunit. The sequence is that of Large ribosomal subunit protein bL20 from Tropheryma whipplei (strain Twist) (Whipple's bacillus).